Consider the following 380-residue polypeptide: MRSASILSAALAAFAPLASAADAVSGAAEGFAKGVTGGGSATPVYPSTTAELASYLKDSSARVIVLTKTFDFTGTEGTTTETGCAPYGTAAACQVAINKDNWCTNYQPNAPKVSVSYDKAPFNPLIVGSNKSLIGQGSKGVIKGKGLRITNSAKNVIIQNIHITNLNPKYVWGGDAISLDGTDLVWFDHVKTSLIGRQHIVLGNGASNRVTISNNEIDGSTSWSATCDNHHYWGVYLTGSNDMVTFSKNYIHHTSGRSPKIAGNSLVHISGNYFYANSGHAMEADAGAKVVLEGNVFQNVVAAMQSGLAGKVFSSPDANTNAQCSSYLGHTCQLNAYGSSGSLSGSDTSILSSFSGKNVAATVTANDAKNVPNTAGFGKI.

An N-terminal signal peptide occupies residues 1–20 (MRSASILSAALAAFAPLASA). Asparagine 130 is a glycosylation site (N-linked (GlcNAc...) asparagine).

This sequence belongs to the polysaccharide lyase 1 family.

It is found in the secreted. The catalysed reaction is Eliminative cleavage of (1-&gt;4)-alpha-D-galacturonan methyl ester to give oligosaccharides with 4-deoxy-6-O-methyl-alpha-D-galact-4-enuronosyl groups at their non-reducing ends.. In Colletotrichum gloeosporioides (Anthracnose fungus), this protein is Pectin lyase (PNLA).